Consider the following 937-residue polypeptide: Valine--tRNA ligase (937 aa).

The short motif at 44-54 (PNVTGTLHMGH) is the 'HIGH' region element. Positions 548–552 (KMSKS) match the 'KMSKS' region motif. K551 lines the ATP pocket. Residues 874–937 (AAETARLTKE…KLKAQLLKLA (64 aa)) adopt a coiled-coil conformation.

It belongs to the class-I aminoacyl-tRNA synthetase family. ValS type 1 subfamily. Monomer.

The protein localises to the cytoplasm. It catalyses the reaction tRNA(Val) + L-valine + ATP = L-valyl-tRNA(Val) + AMP + diphosphate. Its function is as follows. Catalyzes the attachment of valine to tRNA(Val). As ValRS can inadvertently accommodate and process structurally similar amino acids such as threonine, to avoid such errors, it has a 'posttransfer' editing activity that hydrolyzes mischarged Thr-tRNA(Val) in a tRNA-dependent manner. In Laribacter hongkongensis (strain HLHK9), this protein is Valine--tRNA ligase.